We begin with the raw amino-acid sequence, 428 residues long: Probable methanogen homoaconitase large subunit (428 aa).

[4Fe-4S] cluster-binding residues include cysteine 304, cysteine 364, and cysteine 367.

The protein belongs to the aconitase/IPM isomerase family. LeuC type 2 subfamily. As to quaternary structure, heterotetramer of 2 HacA and 2 HacB proteins.

It carries out the reaction (2R)-homocitrate = (2R,3S)-homoisocitrate. It catalyses the reaction (2R)-homocitrate = cis-homoaconitate + H2O. The enzyme catalyses (2R,3S)-homoisocitrate = cis-homoaconitate + H2O. The catalysed reaction is cis-(homo)2aconitate + H2O = (2R,3S)-iso(homo)2citrate. It carries out the reaction cis-(homo)3aconitate + H2O = (2R,3S)-iso(homo)3citrate. It participates in organic acid metabolism; 2-oxosuberate biosynthesis. Its function is as follows. Component of a hydro-lyase with broad substrate specificity for cis-unsaturated tricarboxylic acids. Catalyzes both the reversible dehydration of (R)-homocitrate ((R)-2-hydroxybutane-1,2,4-tricarboxylate) to produce cis-homoaconitate ((Z)-but-1-ene-1,2,4-tricarboxylate), and its hydration to homoisocitrate ((1R,2S)-1-hydroxybutane-1,2,4-tricarboxylate). Is also able to hydrate the analogous longer chain substrates cis-homo(2)-aconitate, cis-homo(3)-aconitate. These reactions are part of the biosynthesis pathway of coenzyme B. The sequence is that of Probable methanogen homoaconitase large subunit (hacA) from Methanothermobacter thermautotrophicus (strain ATCC 29096 / DSM 1053 / JCM 10044 / NBRC 100330 / Delta H) (Methanobacterium thermoautotrophicum).